The sequence spans 323 residues: Serpentine receptor class gamma-5 (323 aa).

The next 7 membrane-spanning stretches (helical) occupy residues 31–51 (QLFY…IMLF), 63–83 (FIIF…DLFI), 98–117 (YPLF…IYNY), 151–171 (IPVT…NVII), 193–213 (WASL…ITVF), 245–265 (AAFF…ITAA), and 272–292 (FLQG…MVLI).

The protein belongs to the nematode receptor-like protein srg family.

Its subcellular location is the membrane. This is Serpentine receptor class gamma-5 (srg-5) from Caenorhabditis elegans.